An 84-amino-acid polypeptide reads, in one-letter code: Small ribosomal subunit protein bS16 (84 aa).

This sequence belongs to the bacterial ribosomal protein bS16 family.

In Delftia acidovorans (strain DSM 14801 / SPH-1), this protein is Small ribosomal subunit protein bS16.